The chain runs to 279 residues: DegV domain-containing protein M6_Spy1246 (279 aa).

The region spanning 4-278 (IKIVTDSSIT…EGAFAVMVRY (275 aa)) is the DegV domain. The hexadecanoate site is built by Thr-62 and Ser-95.

May bind long-chain fatty acids, such as palmitate, and may play a role in lipid transport or fatty acid metabolism. In Streptococcus pyogenes serotype M6 (strain ATCC BAA-946 / MGAS10394), this protein is DegV domain-containing protein M6_Spy1246.